Reading from the N-terminus, the 147-residue chain is Leghemoglobin 3 (147 aa).

The Globin domain occupies 2 to 147 (GFTAQQEALV…LATAIKKAMG (146 aa)). Position 30 is a nitrated tyrosine (tyrosine 30). Serine 45 lines the heme b pocket. Serine 45 is modified (phosphoserine). Histidine 61 is a binding site for O2. The heme b site is built by lysine 64, histidine 93, and lysine 96. The residue at position 135 (tyrosine 135) is a Nitrated tyrosine.

It belongs to the plant globin family. Monomer. In terms of processing, nitrated in effective nodules and particularly in hypoxic conditions; this mechanism may play a protective role in the symbiosis by buffering toxic peroxynitrite NO(2)(-). Nitration level decrease during nodule senescence. Phosphorylation at Ser-45 disrupts the molecular environment of its porphyrin ring oxygen binding pocket, thus leading to a reduced oxygen consumption and to the delivery of oxygen O(2) to symbiosomes. Specifically and strongly expressed in root nodules and at low levels in seedlings.

It is found in the cytoplasm. The protein localises to the cytosol. It localises to the nucleus. Functionally, leghemoglobin that reversibly binds oxygen O(2) through a pentacoordinated heme iron. In root nodules, facilitates the diffusion of oxygen to the bacteroids while preventing the bacterial nitrogenase from being inactivated by buffering dioxygen, nitric oxide and carbon monoxide, and promoting the formation of reactive oxygen species (ROS, e.g. H(2)O(2)). This role is essential for symbiotic nitrogen fixation (SNF). This is Leghemoglobin 3 from Lotus japonicus (Lotus corniculatus var. japonicus).